Here is a 245-residue protein sequence, read N- to C-terminus: Proteasome subunit alpha type-7-1B (245 aa).

The protein belongs to the peptidase T1A family. As to quaternary structure, the 26S proteasome consists of a 20S proteasome core and two 19S regulatory subunits. The 20S proteasome core is composed of 28 subunits that are arranged in four stacked rings, resulting in a barrel-shaped structure. The two end rings are each formed by seven alpha subunits, and the two central rings are each formed by seven beta subunits. The catalytic chamber with the active sites is on the inside of the barrel. As to expression, testis specific.

The protein resides in the cytoplasm. The protein localises to the nucleus. Its function is as follows. The proteasome is a multicatalytic proteinase complex which is characterized by its ability to cleave peptides with Arg, Phe, Tyr, Leu, and Glu adjacent to the leaving group at neutral or slightly basic pH. The proteasome has an ATP-dependent proteolytic activity. The protein is Proteasome subunit alpha type-7-1B (Pros28.1B) of Drosophila virilis (Fruit fly).